Reading from the N-terminus, the 40-residue chain is Allophycocyanin alpha-B chain (40 aa).

Belongs to the phycobiliprotein family. As to quaternary structure, heterodimer of an alpha and a beta chain. Contains one covalently linked bilin chromophore.

The protein resides in the cellular thylakoid membrane. Light-harvesting photosynthetic bile pigment-protein from the phycobiliprotein complex. Allophycocyanin has a maximum absorption at approximately 650 nanometers. The protein is Allophycocyanin alpha-B chain of Mastigocladus laminosus (Fischerella sp.).